We begin with the raw amino-acid sequence, 735 residues long: MGRGGIGGAGLVAAVAKADVENTDSTRGFVKDVKRIIIKVGTAVVTGPNGRLAMGRLGALCEQVKQLNFEGYEVILVTSGAVGVGRQRLKYRKLVNSSFADLQNPQMDMDGKACAAVGQSVLMAIYDTLFSQLDVTSSQLLVTDRDFMDPSFGNQLRETVNSLLDLKVIPVFNENDAISTRRQPYEDSSGIFWDNDSLARLLAQELKADLLIMLSDVEGLYSGPPSDPQSKIIHTYVHEQHGKLISFGEKSRVGRGGMQAKVAAAFTASSKGIPVVIASGFAIDSIIKVMRGEKIGTLFHREANQWGCSKEATAREMAVAARDCSRHLQKLSSEERKKILLDIADALEANEDLITSENQADLDLAQDIGYDKSLVARMTIKPGKIKSLAGSIREIADMEDPISHTLKRTEVAKDLVFEKTYCPLGVLLIIFESRPDALVQIASLAIRSGNGLLLKGGKEAMRSNTILHKVITGAIPDVVGKKLIGLVKNKDEIADLLKLDDVIDLVIPRGSNKLVSQIKAATKIPVLGHADGICHVYIDKSADMDMAKRIVLDAKVDYPAACNAMETLLVHKDLNRTEGLDDLLVELEKEGVVIYGGPVAHDTLKLPKVDSFHHEYNSMACTLEFVDDVQSAIDHINRYGSAHTDCIITTDGKAAETFLQQVDSAAVFHNASTRFCDGARFGLGAEVGISTGRIHARGPVGVDGLLTTRCILRGSGQVVNGDKGVVYTHRELPLQ.

The interval methionine 1 to arginine 315 is glutamate 5-kinase. Substrate contacts are provided by serine 79, aspartate 176, and asparagine 195. ATP-binding positions include serine 215 to aspartate 216, tyrosine 221 to serine 226, and arginine 255 to lysine 261. Residues glutamate 316–glutamine 735 form a gamma-glutamyl phosphate reductase region.

This sequence in the N-terminal section; belongs to the glutamate 5-kinase family. It in the C-terminal section; belongs to the gamma-glutamyl phosphate reductase family.

The enzyme catalyses L-glutamate + ATP = L-glutamyl 5-phosphate + ADP. The catalysed reaction is L-glutamate 5-semialdehyde + phosphate + NADP(+) = L-glutamyl 5-phosphate + NADPH + H(+). It participates in amino-acid biosynthesis; L-proline biosynthesis; L-glutamate 5-semialdehyde from L-glutamate: step 1/2. It functions in the pathway amino-acid biosynthesis; L-proline biosynthesis; L-glutamate 5-semialdehyde from L-glutamate: step 2/2. With respect to regulation, feedback regulated by proline. P5CS plays a key role in proline biosynthesis, leading to osmoregulation in plants. Involved in abiotic stress tolerance. The protein is Delta-1-pyrroline-5-carboxylate synthase 2 of Oryza sativa subsp. japonica (Rice).